A 128-amino-acid polypeptide reads, in one-letter code: Small ribosomal subunit protein uS9c (128 aa).

Belongs to the universal ribosomal protein uS9 family.

The protein resides in the plastid. The chain is Small ribosomal subunit protein uS9c (rps9) from Euglena longa (Euglenophycean alga).